The chain runs to 86 residues: MEQKRGMRKTRIGVVVSDKMDKTVVVAVETLVQHPLYKKTIKRTTKFKAHDENNECRVGDKVLIMETRPLSKEKRWRVVQILERAK.

The protein belongs to the universal ribosomal protein uS17 family. Part of the 30S ribosomal subunit.

In terms of biological role, one of the primary rRNA binding proteins, it binds specifically to the 5'-end of 16S ribosomal RNA. In Caldicellulosiruptor saccharolyticus (strain ATCC 43494 / DSM 8903 / Tp8T 6331), this protein is Small ribosomal subunit protein uS17.